Consider the following 917-residue polypeptide: Isoleucine--tRNA ligase (917 aa).

The 'HIGH' region signature appears at 59 to 69 (PYANGHIHIGH). Glutamate 569 serves as a coordination point for L-isoleucyl-5'-AMP. Residues 610 to 614 (KMSKS) carry the 'KMSKS' region motif. Position 613 (lysine 613) interacts with ATP. Positions 890, 893, 905, and 908 each coordinate Zn(2+).

Belongs to the class-I aminoacyl-tRNA synthetase family. IleS type 1 subfamily. As to quaternary structure, monomer. It depends on Zn(2+) as a cofactor.

Its subcellular location is the cytoplasm. It carries out the reaction tRNA(Ile) + L-isoleucine + ATP = L-isoleucyl-tRNA(Ile) + AMP + diphosphate. Functionally, catalyzes the attachment of isoleucine to tRNA(Ile). As IleRS can inadvertently accommodate and process structurally similar amino acids such as valine, to avoid such errors it has two additional distinct tRNA(Ile)-dependent editing activities. One activity is designated as 'pretransfer' editing and involves the hydrolysis of activated Val-AMP. The other activity is designated 'posttransfer' editing and involves deacylation of mischarged Val-tRNA(Ile). The polypeptide is Isoleucine--tRNA ligase (Campylobacter jejuni subsp. jejuni serotype O:2 (strain ATCC 700819 / NCTC 11168)).